The sequence spans 167 residues: NADH-quinone oxidoreductase subunit I 1 (167 aa).

4Fe-4S ferredoxin-type domains lie at 52 to 82 and 98 to 127; these read LQRDVNGMEKCVACFLCAAACPSNCIYIEAA and KVYNIDYNRCIFCGYCVEACPTDAITHGHG. [4Fe-4S] cluster is bound by residues C62, C65, C68, C72, C107, C110, C113, and C117. The tract at residues 148–167 is disordered; sequence PVPPGAKPPSMADEVPAGAH.

This sequence belongs to the complex I 23 kDa subunit family. In terms of assembly, NDH-1 is composed of 14 different subunits. Subunits NuoA, H, J, K, L, M, N constitute the membrane sector of the complex. [4Fe-4S] cluster serves as cofactor.

It localises to the cell inner membrane. It carries out the reaction a quinone + NADH + 5 H(+)(in) = a quinol + NAD(+) + 4 H(+)(out). In terms of biological role, NDH-1 shuttles electrons from NADH, via FMN and iron-sulfur (Fe-S) centers, to quinones in the respiratory chain. The immediate electron acceptor for the enzyme in this species is believed to be ubiquinone. Couples the redox reaction to proton translocation (for every two electrons transferred, four hydrogen ions are translocated across the cytoplasmic membrane), and thus conserves the redox energy in a proton gradient. This is NADH-quinone oxidoreductase subunit I 1 from Solibacter usitatus (strain Ellin6076).